The sequence spans 473 residues: Glutamate--tRNA ligase 1 (473 aa).

The short motif at 23 to 33 (PSPTGLLHVGG) is the 'HIGH' region element. Residues 252 to 256 (KLSKR) carry the 'KMSKS' region motif. Lys-255 is an ATP binding site.

This sequence belongs to the class-I aminoacyl-tRNA synthetase family. Glutamate--tRNA ligase type 1 subfamily. In terms of assembly, monomer.

It localises to the cytoplasm. The enzyme catalyses tRNA(Glu) + L-glutamate + ATP = L-glutamyl-tRNA(Glu) + AMP + diphosphate. Functionally, catalyzes the attachment of glutamate to tRNA(Glu) in a two-step reaction: glutamate is first activated by ATP to form Glu-AMP and then transferred to the acceptor end of tRNA(Glu). The chain is Glutamate--tRNA ligase 1 from Granulibacter bethesdensis (strain ATCC BAA-1260 / CGDNIH1).